We begin with the raw amino-acid sequence, 464 residues long: Argininosuccinate lyase (464 aa).

This sequence belongs to the lyase 1 family. Argininosuccinate lyase subfamily.

The protein resides in the cytoplasm. It catalyses the reaction 2-(N(omega)-L-arginino)succinate = fumarate + L-arginine. It participates in amino-acid biosynthesis; L-arginine biosynthesis; L-arginine from L-ornithine and carbamoyl phosphate: step 3/3. The polypeptide is Argininosuccinate lyase (Pseudomonas putida (strain GB-1)).